The sequence spans 617 residues: MPKYRSFTTTHGRNMSGARSLWRATGMTDEDFKKPIIAIVNSFSQFVPGHIHLQEVGKIISKEIKKYGGVPKEFNTIAIDDGIAMGHSGMLYSLPSRELIADSIEYVINAHCVDSMICVSNCDKITPAMFMASLRLNIPSVFVSGGPMEAGKIKTKDKTKKIDLVDAIIHGGDSNKSDDFIREIELSACPTCGSCSGMFTANSMNCLIEAIGLSLPGNGTLLATHIDRKKLFKKSARNIVKITKDYYLNNNKNVLPRNIANKESFENAMALDIAMGGSTNTILHLLAAAYEGKVDFKMSDINNLSKKIPHICKVAPSTNLYHVEDVHRAGGVMRILGELNRSNLLNKKTENILGLNLEKTLKKYDILSTKNKNVIKMFHAGPGGNRTIKPFSQNYRWNKLDKDRVNGCIRSHENAYSKNGGLSVLYGNLAKNGCIIKTASIDKKHYIFSGPAKVYESQEEAVSAILSGKIIAGDVIVIRYEGPKGGPGMQEMLYPTTYLKSINLDKQCALITDGRFSGGTSGLSIGHISPEAANKGIIALVENGDDIQINIVNKTIHLNITEKELNLRIIKENAKGLKAYKPLNRKRNISFALRAYAHFALSADKGAIRNKKKLFNF.

Aspartate 81 provides a ligand contact to Mg(2+). A [2Fe-2S] cluster-binding site is contributed by cysteine 122. 2 residues coordinate Mg(2+): aspartate 123 and lysine 124. The residue at position 124 (lysine 124) is an N6-carboxylysine. Cysteine 195 contacts [2Fe-2S] cluster. Glutamate 491 is a binding site for Mg(2+). Serine 517 serves as the catalytic Proton acceptor.

This sequence belongs to the IlvD/Edd family. As to quaternary structure, homodimer. It depends on [2Fe-2S] cluster as a cofactor. The cofactor is Mg(2+).

The enzyme catalyses (2R)-2,3-dihydroxy-3-methylbutanoate = 3-methyl-2-oxobutanoate + H2O. It carries out the reaction (2R,3R)-2,3-dihydroxy-3-methylpentanoate = (S)-3-methyl-2-oxopentanoate + H2O. It participates in amino-acid biosynthesis; L-isoleucine biosynthesis; L-isoleucine from 2-oxobutanoate: step 3/4. The protein operates within amino-acid biosynthesis; L-valine biosynthesis; L-valine from pyruvate: step 3/4. Its function is as follows. Functions in the biosynthesis of branched-chain amino acids. Catalyzes the dehydration of (2R,3R)-2,3-dihydroxy-3-methylpentanoate (2,3-dihydroxy-3-methylvalerate) into 2-oxo-3-methylpentanoate (2-oxo-3-methylvalerate) and of (2R)-2,3-dihydroxy-3-methylbutanoate (2,3-dihydroxyisovalerate) into 2-oxo-3-methylbutanoate (2-oxoisovalerate), the penultimate precursor to L-isoleucine and L-valine, respectively. The chain is Dihydroxy-acid dehydratase from Buchnera aphidicola subsp. Schizaphis graminum (strain Sg).